Consider the following 199-residue polypeptide: Putative rhomboid protease YdcA (199 aa).

The next 6 membrane-spanning stretches (helical) occupy residues 14–34, 65–85, 97–117, 122–142, 147–167, and 172–192; these read LYPV…FFSL, ILLH…FLFA, FLLV…VTEP, HVGA…MVLF, IGQE…LMSF, and INMM…FLCV. Catalysis depends on serine 126, which acts as the Nucleophile. Histidine 177 (charge relay system) is an active-site residue.

This sequence belongs to the peptidase S54 family.

It localises to the cell membrane. The chain is Putative rhomboid protease YdcA (ydcA) from Bacillus subtilis (strain 168).